A 118-amino-acid chain; its full sequence is Large ribosomal subunit protein bL20 (118 aa).

The protein belongs to the bacterial ribosomal protein bL20 family.

Its function is as follows. Binds directly to 23S ribosomal RNA and is necessary for the in vitro assembly process of the 50S ribosomal subunit. It is not involved in the protein synthesizing functions of that subunit. In Trichormus variabilis (strain ATCC 29413 / PCC 7937) (Anabaena variabilis), this protein is Large ribosomal subunit protein bL20.